The sequence spans 598 residues: Elongation factor 4 (598 aa).

Residues 2–184 (KNIRNFSIIA…RLVKEIPAPE (183 aa)) enclose the tr-type G domain. GTP-binding positions include 14–19 (DHGKST) and 131–134 (NKID).

Belongs to the TRAFAC class translation factor GTPase superfamily. Classic translation factor GTPase family. LepA subfamily.

It is found in the cell inner membrane. It catalyses the reaction GTP + H2O = GDP + phosphate + H(+). In terms of biological role, required for accurate and efficient protein synthesis under certain stress conditions. May act as a fidelity factor of the translation reaction, by catalyzing a one-codon backward translocation of tRNAs on improperly translocated ribosomes. Back-translocation proceeds from a post-translocation (POST) complex to a pre-translocation (PRE) complex, thus giving elongation factor G a second chance to translocate the tRNAs correctly. Binds to ribosomes in a GTP-dependent manner. This chain is Elongation factor 4, found in Proteus mirabilis (strain HI4320).